Here is a 404-residue protein sequence, read N- to C-terminus: Phosphoglycerate kinase (404 aa).

Substrate is bound by residues 26–28, Arg41, 64–67, Arg124, and Arg161; these read DFN and HLGR. Residues Lys212, Gly301, Glu332, and 359-362 each bind ATP; that span reads GGDS.

It belongs to the phosphoglycerate kinase family. As to quaternary structure, monomer.

The protein localises to the cytoplasm. It carries out the reaction (2R)-3-phosphoglycerate + ATP = (2R)-3-phospho-glyceroyl phosphate + ADP. The protein operates within carbohydrate degradation; glycolysis; pyruvate from D-glyceraldehyde 3-phosphate: step 2/5. This chain is Phosphoglycerate kinase, found in Mesomycoplasma hyopneumoniae (strain 232) (Mycoplasma hyopneumoniae).